Reading from the N-terminus, the 381-residue chain is Queuine tRNA-ribosyltransferase (381 aa).

Aspartate 96 (proton acceptor) is an active-site residue. Residues 96 to 100 (DSGGF), aspartate 150, glutamine 193, and glycine 220 each bind substrate. The segment at 251–257 (GVGAPDS) is RNA binding. Catalysis depends on aspartate 270, which acts as the Nucleophile. Residues 275–279 (TRIAR) are RNA binding; important for wobble base 34 recognition. Residues cysteine 308, cysteine 310, cysteine 313, and histidine 339 each contribute to the Zn(2+) site.

This sequence belongs to the queuine tRNA-ribosyltransferase family. As to quaternary structure, homodimer. Within each dimer, one monomer is responsible for RNA recognition and catalysis, while the other monomer binds to the replacement base PreQ1. The cofactor is Zn(2+).

It carries out the reaction 7-aminomethyl-7-carbaguanine + guanosine(34) in tRNA = 7-aminomethyl-7-carbaguanosine(34) in tRNA + guanine. Its pathway is tRNA modification; tRNA-queuosine biosynthesis. In terms of biological role, catalyzes the base-exchange of a guanine (G) residue with the queuine precursor 7-aminomethyl-7-deazaguanine (PreQ1) at position 34 (anticodon wobble position) in tRNAs with GU(N) anticodons (tRNA-Asp, -Asn, -His and -Tyr). Catalysis occurs through a double-displacement mechanism. The nucleophile active site attacks the C1' of nucleotide 34 to detach the guanine base from the RNA, forming a covalent enzyme-RNA intermediate. The proton acceptor active site deprotonates the incoming PreQ1, allowing a nucleophilic attack on the C1' of the ribose to form the product. After dissociation, two additional enzymatic reactions on the tRNA convert PreQ1 to queuine (Q), resulting in the hypermodified nucleoside queuosine (7-(((4,5-cis-dihydroxy-2-cyclopenten-1-yl)amino)methyl)-7-deazaguanosine). In Enterococcus faecalis (strain ATCC 700802 / V583), this protein is Queuine tRNA-ribosyltransferase.